A 227-amino-acid polypeptide reads, in one-letter code: Small ribosomal subunit protein uS5 (227 aa).

A disordered region spans residues 1–22 (MSKRSNRSNNKNNTNKFNIENW). Positions 7 to 18 (RSNNKNNTNKFN) are enriched in low complexity. Residues 63 to 126 (LEEEVMDVNL…DAAKYNLIKV (64 aa)) form the S5 DRBM domain.

Belongs to the universal ribosomal protein uS5 family. Part of the 30S ribosomal subunit. Contacts protein S4.

In terms of biological role, with S4 and S12 plays an important role in translational accuracy. This chain is Small ribosomal subunit protein uS5, found in Methanosphaera stadtmanae (strain ATCC 43021 / DSM 3091 / JCM 11832 / MCB-3).